Consider the following 361-residue polypeptide: Protein RecA (361 aa).

68–75 (GPESSGKT) provides a ligand contact to ATP. The segment at 342–361 (PEGAKENISAKDDVAVDTKE) is disordered. Positions 344–361 (GAKENISAKDDVAVDTKE) are enriched in basic and acidic residues.

It belongs to the RecA family.

It is found in the cytoplasm. Its function is as follows. Can catalyze the hydrolysis of ATP in the presence of single-stranded DNA, the ATP-dependent uptake of single-stranded DNA by duplex DNA, and the ATP-dependent hybridization of homologous single-stranded DNAs. It interacts with LexA causing its activation and leading to its autocatalytic cleavage. This chain is Protein RecA, found in Clostridium beijerinckii (strain ATCC 51743 / NCIMB 8052) (Clostridium acetobutylicum).